The primary structure comprises 91 residues: Bacterial microcompartment shell protein PduJ (91 aa).

Positions alanine 4–proline 88 constitute a BMC domain.

Belongs to the bacterial microcompartments protein family. In terms of assembly, homohexamer with a central pore of about 5.7 Angstroms in diameter. Interacts with PduP, which targets PduP to the BMC.

Its subcellular location is the bacterial microcompartment. Its pathway is polyol metabolism; 1,2-propanediol degradation. Functionally, one of the major shell proteins of the bacterial microcompartment (BMC) dedicated to 1,2-propanediol (1,2-PD) degradation. The isolated BMC shell component protein ratio for J:A:B':B:K:T:U is approximately 15:10:7:6:1:1:2. At least one of PduA or PduJ is required for BMC assembly; it must be encoded as the first gene in the pdu operon. Required for structural integrity of BMCs and to mitigate propionaldehyde toxicity, probably joins facets responsible for BMC closure. Edge residues (particularly Lys-25) are important for function and assembly of the BMC. 80% identical to PduA; although their pore regions appear structurally identical, unlike PduA plays no role in 1,2-PD diffusion into or out of the BMC shell. If pduJ is cloned in the chromosomal position of pduA it is able to complement a pduA deletion; it then has a functional pore as it assumes the transport functions of PduA. Overexpression of this protein leads to aberrant filaments that extend the length of the cell, cross the cleavage furrow and impair division. The filaments form nanotubes with a hollow center. Modeling suggests PduJ is probably the hub for binding multiple enzymes to the interior of the BMC; modeling suggests PduC, PduD, PduG and PduM are targeted to PduJ. In terms of biological role, the 1,2-propanediol (1,2-PD) degradation bacterial microcompartment (BMC) concentrates low levels of 1,2-PD catabolic enzymes, concentrates volatile reaction intermediates thus enhancing pathway flux and keeps the level of toxic, mutagenic propionaldehyde low. This Salmonella typhimurium (strain LT2 / SGSC1412 / ATCC 700720) protein is Bacterial microcompartment shell protein PduJ.